A 96-amino-acid chain; its full sequence is uncharacterized protein (96 aa).

Positions 1–19 (MKFLSALLLIVLLISVVFG) are cleaved as a signal peptide. Asparagine 20 carries an N-linked (GlcNAc...) asparagine glycan. The span at 27 to 46 (AWATTTTGGTTGSQTSPATH) shows a compositional bias: low complexity. Residues 27 to 58 (AWATTTTGGTTGSQTSPATHGGHGGNGGNGHS) form a disordered region. Over residues 47–56 (GGHGGNGGNG) the composition is skewed to gly residues.

Its subcellular location is the secreted. This is an uncharacterized protein from Dictyostelium discoideum (Social amoeba).